The primary structure comprises 160 residues: Ribosomal RNA large subunit methyltransferase H (160 aa).

S-adenosyl-L-methionine is bound by residues Leu-78, Gly-109, and 128-133 (LSNLTL).

This sequence belongs to the RNA methyltransferase RlmH family. As to quaternary structure, homodimer.

It is found in the cytoplasm. The catalysed reaction is pseudouridine(1915) in 23S rRNA + S-adenosyl-L-methionine = N(3)-methylpseudouridine(1915) in 23S rRNA + S-adenosyl-L-homocysteine + H(+). Specifically methylates the pseudouridine at position 1915 (m3Psi1915) in 23S rRNA. The polypeptide is Ribosomal RNA large subunit methyltransferase H (Alcanivorax borkumensis (strain ATCC 700651 / DSM 11573 / NCIMB 13689 / SK2)).